Reading from the N-terminus, the 792-residue chain is Glucocorticoid receptor (792 aa).

A compositionally biased stretch (basic and acidic residues) spans 1–15 (MDSKESLAPPGRDEV). Residues 1–25 (MDSKESLAPPGRDEVPSSLLGRGRG) form a disordered region. Positions 1-436 (MDSKESLAPP…STATGPPPKL (436 aa)) are modulating. R24 is subject to Omega-N-methylarginine. S46 bears the Phosphoserine mark. The interval 67 to 98 (SKGSASNAQQQQQQQQQQQQQQQQQPQPDLSK) is disordered. Residues 75 to 94 (QQQQQQQQQQQQQQQQQPQP) show a composition bias toward low complexity. Residues S131, S152, and S159 each carry the phosphoserine modification. The segment covering 148-162 (NRSTSRPENPKSSTP) has biased composition (polar residues). A disordered region spans residues 148-201 (NRSTSRPENPKSSTPAAGCATPTEKEFPQTHSDPSSEQQNRKSQPGTNGGSVKL). Residue T168 is modified to Phosphothreonine. Polar residues predominate over residues 176–193 (QTHSDPSSEQQNRKSQPG). Phosphoserine occurs at positions 221, 229, 243, and 284. Glycyl lysine isopeptide (Lys-Gly) (interchain with G-Cter in SUMO); alternate cross-links involve residues K294 and K310. Glycyl lysine isopeptide (Lys-Gly) (interchain with G-Cter in SUMO2); alternate cross-links involve residues K294 and K310. S324 and S421 each carry phosphoserine. The segment at residues 434–509 (PKLCLVCSDE…AGMNLEARKT (76 aa)) is a DNA-binding region (nuclear receptor). A Glycyl lysine isopeptide (Lys-Gly) (interchain with G-Cter in ubiquitin) cross-link involves residue K435. 2 NR C4-type zinc fingers span residues 437 to 457 (CLVC…CGSC) and 473 to 497 (CAGR…YRKC). 4 positions are modified to N6-acetyllysine: K496, K508, K510, and K511. The interaction with CLOCK stretch occupies residues 501–792 (GMNLEARKTK…NIKKLLFHQK (292 aa)). The hinge stretch occupies residues 503–538 (NLEARKTKKKIKGIQQATAGVSQDTSENANKTIVPA). Residues 539 to 773 (ALPQLTPTLV…FPEMLAEIIT (235 aa)) form the NR LBD domain. Residues 547-712 (LVSLLEVIEP…EIRMTYIKEL (166 aa)) form an interaction with CRY1 region. Residue K718 forms a Glycyl lysine isopeptide (Lys-Gly) (interchain with G-Cter in SUMO) linkage.

This sequence belongs to the nuclear hormone receptor family. NR3 subfamily. In terms of assembly, heteromultimeric cytoplasmic complex with HSP90AA1, HSPA1A/HSPA1B, and FKBP5 or another immunophilin such as PPID, STIP1, or the immunophilin homolog PPP5C. Upon ligand binding FKBP5 dissociates from the complex and FKBP4 takes its place, thereby linking the complex to dynein and mediating transport to the nucleus, where the complex dissociates. Probably forms a complex composed of chaperones HSP90 and HSP70, co-chaperones CDC37, PPP5C, TSC1 and client protein TSC2, CDK4, AKT, RAF1 and NR3C1; this complex does not contain co-chaperones STIP1/HOP and PTGES3/p23. Directly interacts with UNC45A. Binds to DNA as a homodimer, and as heterodimer with NR3C2 or the retinoid X receptor. Binds STAT5A and STAT5B homodimers and heterodimers. Interacts with NRIP1, POU2F1, POU2F2 and TRIM28. Interacts with several coactivator complexes, including the SMARCA4 complex, CREBBP/EP300, TADA2L (Ada complex) and p160 coactivators such as NCOA2 and NCOA6. Interaction with BAG1 inhibits transactivation. Interacts with HEXIM1 and TGFB1I1. Interacts with NCOA1. Interacts with NCOA3, SMARCA4, SMARCC1, SMARCD1, and SMARCE1. Interacts with CLOCK, CRY1 and CRY2 in a ligand-dependent fashion. Interacts with CIART. Interacts with RWDD3. Interacts with UBE2I/UBC9 and this interaction is enhanced in the presence of RWDD3. Interacts with GRIP1. Interacts with NR4A3 (via nuclear receptor DNA-binding domain), represses transcription activity of NR4A3 on the POMC promoter Nur response element (NurRE). Directly interacts with PNRC2 to attract and form a complex with UPF1 and DCP1A; the interaction leads to rapid mRNA degradation. Interacts with GSK3B. Interacts with FNIP1 and FNIP2. Interacts (via C-terminus) with HNRNPU (via C-terminus). Interacts with MCM3AP. Interacts (via domain NR LBD) with HSP90AA1 and HSP90AB1. In the absence of hormonal ligand, interacts with TACC1. Interacts (via NR LBD domain) with ZNF764 (via KRAB domain); the interaction regulates transcription factor activity of NR3C1 by directing its actions toward certain biologic pathways. Acetylation by CLOCK reduces its binding to glucocorticoid response elements and its transcriptional activity. In terms of processing, increased proteasome-mediated degradation in response to glucocorticoids. Post-translationally, phosphorylated in the absence of hormone; becomes hyperphosphorylated in the presence of glucocorticoids. Phosphorylated in the absence of hormone; becomes hyperphosphorylated in the presence of glucocorticoid. The Ser-221, Ser-243 and Ser-421-phosphorylated forms are mainly cytoplasmic, and the Ser-229-phosphorylated form is nuclear. Phosphorylation at Ser-229 increases transcriptional activity. Phosphorylation at Ser-221, Ser-243 and Ser-421 decreases signaling capacity. Phosphorylation at Ser-421 may protect from glucocorticoid-induced apoptosis. Phosphorylation at Ser-221 and Ser-229 is not required in regulation of chromosome segregation. May be dephosphorylated by PPP5C, attenuates NR3C1 action. Sumoylation at Lys-294 and Lys-310 negatively regulates its transcriptional activity. Sumoylation at Lys-718 positively regulates its transcriptional activity in the presence of RWDD3. Sumoylation at Lys-294 and Lys-310 is dispensable whereas sumoylation at Lys-718 is critical for the stimulatory effect of RWDD3 on its transcriptional activity. Heat shock increases sumoylation in a RWDD3-dependent manner. In terms of processing, ubiquitinated. Ubiquitination by UBR5 leads to its degradation: UBR5 specifically recognizes and binds ligand-bound NR3C1 when it is not associated with coactivators (NCOAs). In presence of NCOAs, the UBR5-degron is not accessible, preventing its ubiquitination and degradation. Expressed in spleen, kidney and liver. Expressed in a circadian manner in the liver. In terms of tissue distribution, expressed at highest level in spleen with lesser amounts in kidney and liver.

It is found in the cytoplasm. It localises to the nucleus. Its subcellular location is the mitochondrion. The protein localises to the cytoskeleton. The protein resides in the spindle. It is found in the microtubule organizing center. It localises to the centrosome. Its subcellular location is the chromosome. The protein localises to the nucleoplasm. In terms of biological role, receptor for glucocorticoids (GC). Has a dual mode of action: as a transcription factor that binds to glucocorticoid response elements (GRE), both for nuclear and mitochondrial DNA, and as a modulator of other transcription factors. Affects inflammatory responses, cellular proliferation and differentiation in target tissues. Involved in chromatin remodeling. Plays a role in rapid mRNA degradation by binding to the 5' UTR of target mRNAs and interacting with PNRC2 in a ligand-dependent manner which recruits the RNA helicase UPF1 and the mRNA-decapping enzyme DCP1A, leading to RNA decay. Could act as a coactivator for STAT5-dependent transcription upon growth hormone (GH) stimulation and could reveal an essential role of hepatic GR in the control of body growth. Its function is as follows. Has transcriptional activation and repression activity. Mediates glucocorticoid-induced apoptosis. Promotes accurate chromosome segregation during mitosis. May act as a tumor suppressor. May play a negative role in adipogenesis through the regulation of lipolytic and antilipogenic gene expression. Acts as a dominant negative inhibitor of isoform 1. Has intrinsic transcriptional activity independent of isoform Alpha when both isoforms are coexpressed. Loses this transcription modulator function on its own. Has no hormone-binding activity. May play a role in controlling glucose metabolism by maintaining insulin sensitivity. Reduces hepatic gluconeogenesis through down-regulation of PEPCK in an isoform Alpha-dependent manner. Directly regulates STAT1 expression in isoform Alpha-independent manner. The chain is Glucocorticoid receptor (Nr3c1) from Mus musculus (Mouse).